Reading from the N-terminus, the 1005-residue chain is Defense-associated sirtuin 2 (1005 aa).

The interval M1–E295 is SIR2. The inter-dimer interaction stretch occupies residues Y56–D111. Catalysis depends on residues Y134, D135, and H171. The MID stretch occupies residues S296–N548. The tract at residues Q549–I1005 is CTD.

In terms of assembly, homotetramer (dimer of dimers). Homodimer. The SIR2 domains are arranged in a central core, adopting a head-to-head arrangement, while the CTDs are positioned at the periphery of the complex. Tetramerization is necessary for the activation of NADase activity. The NADase enzymatic activity of this homotetrameric form is autoinhibited. The activated form of DSR2 (after binding to the phage tube protein) exists as tetramers and dimers, with the tetramers exhibiting more NADase activity. Each tetramer binds 4 NAD(+) molecules. As to quaternary structure, (Microbial infection) Interacts (via C-terminus) with phage SPR tail tube monomer protein (via N-terminus) in a 4:4 DSR2-Tube assembly; this interaction induces a conformation change of the tube protein and activates the NADase activity of DSR2. (Microbial infection) Interacts (via C-terminus) with phage SPbeta DSAD1 in a 4:2 ratio; this interaction prevents activation of the NADase defense activity of DSR2.

It catalyses the reaction NAD(+) + H2O = ADP-D-ribose + nicotinamide + H(+). (Microbial infection) NADase activity is activated through the binding of SPR phage tail tube monomer protein. NADase activity is inhibited through the binding to the phage SPbeta DSR anti-defense 1 (DSAD1). Functionally, anti-phage defense protein that is activated through the binding to the phage tail tube protein monomer and which hydrolyzes NAD+ upon activation (NADase activity). The resulting depletion of NAD(+) leads to an abortive infection. In Bacillus subtilis, this protein is Defense-associated sirtuin 2.